Consider the following 129-residue polypeptide: MTEGKWAIAHIYSSFNNTLITITDLTGAETIAKISGGMVVKAARDESSPYTAMQMAMQVAEQAKAKGIVGVHVKVRAPGGNKQRSPGPGAQAAIRALARAGLRIGRIEDVTPIPHDGTKPKGGKRGRRV.

The interval 108 to 129 (EDVTPIPHDGTKPKGGKRGRRV) is disordered.

This sequence belongs to the universal ribosomal protein uS11 family. In terms of assembly, part of the 30S ribosomal subunit.

Functionally, located on the platform of the 30S subunit. In Methanothrix thermoacetophila (strain DSM 6194 / JCM 14653 / NBRC 101360 / PT) (Methanosaeta thermophila), this protein is Small ribosomal subunit protein uS11.